The primary structure comprises 434 residues: Gamma-enolase (434 aa).

N-acetylserine is present on Ser-2. Lys-5 bears the N6-acetyllysine mark. The residue at position 26 (Thr-26) is a Phosphothreonine. A Mg(2+)-binding site is contributed by Ser-40. The residue at position 44 (Tyr-44) is a Phosphotyrosine. Residue Lys-60 is modified to N6-acetyllysine; alternate. Lys-60 is modified (N6-succinyllysine; alternate). Lys-64 is subject to N6-acetyllysine. Residue Lys-89 is modified to N6-acetyllysine; alternate. At Lys-89 the chain carries N6-succinyllysine; alternate. Substrate-binding residues include His-158 and Glu-167. N6-acetyllysine occurs at positions 193, 197, and 199. Lys-202 carries the post-translational modification N6-acetyllysine; alternate. Lys-202 participates in a covalent cross-link: Glycyl lysine isopeptide (Lys-Gly) (interchain with G-Cter in SUMO2); alternate. Catalysis depends on Glu-210, which acts as the Proton donor. Lys-228 and Lys-233 each carry N6-acetyllysine; alternate. Lys-228 is subject to N6-succinyllysine; alternate. Lys-233 is subject to N6-(2-hydroxyisobutyryl)lysine; alternate. Asp-245 lines the Mg(2+) pocket. Lys-256 carries the post-translational modification N6-acetyllysine. Phosphoserine is present on Ser-263. Tyr-287 is subject to Phosphotyrosine. A Phosphoserine modification is found at Ser-291. The Mg(2+) site is built by Glu-293 and Asp-318. Substrate contacts are provided by Glu-293 and Asp-318. Residues Lys-335 and Lys-343 each carry the N6-acetyllysine modification. Lys-343 (proton acceptor) is an active-site residue. Substrate contacts are provided by residues 370 to 373 (SHRS) and Lys-394. The residue at position 406 (Lys-406) is an N6-acetyllysine.

Belongs to the enolase family. Mammalian enolase is composed of 3 isozyme subunits, alpha, beta and gamma, which can form homodimers or heterodimers which are cell-type and development-specific. Requires Mg(2+) as cofactor. As to expression, skeletal muscle (at protein level). The alpha/alpha homodimer is expressed in embryo and in most adult tissues. The alpha/beta heterodimer and the beta/beta homodimer are found in striated muscle, and the alpha/gamma heterodimer and the gamma/gamma homodimer in neurons.

The protein localises to the cytoplasm. Its subcellular location is the cell membrane. The catalysed reaction is (2R)-2-phosphoglycerate = phosphoenolpyruvate + H2O. It participates in carbohydrate degradation; glycolysis; pyruvate from D-glyceraldehyde 3-phosphate: step 4/5. In terms of biological role, has neurotrophic and neuroprotective properties on a broad spectrum of central nervous system (CNS) neurons. Binds, in a calcium-dependent manner, to cultured neocortical neurons and promotes cell survival. This is Gamma-enolase (Eno2) from Mus musculus (Mouse).